The primary structure comprises 190 residues: CASP-like protein 2U2 (190 aa).

Residues 1 to 10 (MGEKMQGFQG) are Cytoplasmic-facing. Residues 11 to 31 (WSIGIRFLTSCVSIASLILLL) traverse the membrane as a helical segment. Topologically, residues 32–59 (KSKQTVQVSVGLDYVTQQVKYSDTSAFV) are extracellular. Residues 60–80 (YLVFSDILVAVYCIVVLVGLI) form a helical membrane-spanning segment. Topologically, residues 81 to 94 (PAALGKSHPGKAGQ) are cytoplasmic. Residues 95 to 115 (WAIFIFDQVLAYVLLAAASSA) form a helical membrane-spanning segment. The Extracellular portion of the chain corresponds to 116 to 144 (TEVAYLADKGMAKTSWEAVCPRFAHFCHT). A helical membrane pass occupies residues 145-165 (VMASISLSFVAVLLLALLAVV). Residues 166–190 (SASGLFGRFYRRPLFAVKMRHNTLI) are Cytoplasmic-facing.

It belongs to the Casparian strip membrane proteins (CASP) family. Homodimer and heterodimers.

It is found in the cell membrane. This is CASP-like protein 2U2 from Pteridium aquilinum subsp. aquilinum (Bracken fern).